We begin with the raw amino-acid sequence, 274 residues long: uncharacterized protein (274 aa).

This is an uncharacterized protein from Treponema pallidum (strain Nichols).